The chain runs to 103 residues: Trp operon repressor homolog (103 aa).

The DNA-binding element occupies 59–82 (QRQISQMLGVGIATITRGSNELKS).

Belongs to the TrpR family. As to quaternary structure, homodimer.

Its subcellular location is the cytoplasm. Functionally, this protein is an aporepressor. When complexed with L-tryptophan it binds the operator region of the trp operon and prevents the initiation of transcription. The polypeptide is Trp operon repressor homolog (Vibrio parahaemolyticus serotype O3:K6 (strain RIMD 2210633)).